Reading from the N-terminus, the 227-residue chain is UPF0173 metal-dependent hydrolase BCE33L4354 (227 aa).

The protein belongs to the UPF0173 family.

This chain is UPF0173 metal-dependent hydrolase BCE33L4354, found in Bacillus cereus (strain ZK / E33L).